We begin with the raw amino-acid sequence, 103 residues long: Movement protein TGB2 (103 aa).

The Cytoplasmic portion of the chain corresponds to 1-8 (MSFAPPPD). A helical transmembrane segment spans residues 9–29 (YSKIYLALGCGLGLGFVVYAS). The Lumenal portion of the chain corresponds to 30–70 (RVNHLPHVGDNTHNLPHGGQYCDGNKRVLYSGPKSGSSPTN). Residues 71–91 (NLWPFITVIALTLAILLTSCP) form a helical membrane-spanning segment. The Cytoplasmic segment spans residues 92–103 (RRRVCIRCSQHH).

The protein belongs to the Tymovirales TGBp2 protein family.

The protein localises to the host endoplasmic reticulum membrane. Plays a role in viral cell-to-cell propagation, by facilitating genome transport to neighboring plant cells through plasmosdesmata,. The protein is Movement protein TGB2 of Allium cepa var. aggregatum (Shallot).